A 584-amino-acid chain; its full sequence is Alkaline nuclease (584 aa).

Residues 409 to 429 (GGGADHHLRGSPGDSPPPIPF) form a disordered region.

It belongs to the herpesviridae alkaline nuclease family. As to quaternary structure, interacts with major DNA-binding protein; this interaction increases the nuclease processivity of the alkaline exonuclease.

The protein resides in the host nucleus. Its subcellular location is the host cytoplasm. Plays a role in processing non linear or branched viral DNA intermediates in order to promote the production of mature packaged unit-length linear progeny viral DNA molecules. Exhibits endonuclease and exonuclease activities and accepts both double-stranded and single-stranded DNA as substrate. Exonuclease digestion of DNA is in the 5'-&gt; 3' direction and the products are 5'-monophosphate nucleosides. Additionally, forms a recombinase with the major DNA-binding protein, which displays strand exchange activity. In Homo sapiens (Human), this protein is Alkaline nuclease (UL98).